The primary structure comprises 265 residues: Expansin-like A1 (265 aa).

Residues 1 to 20 (MGSFLFLIVVIFLFSSSVNA) form the signal peptide. Residues 41 to 147 (SGACAYGSMA…QRVPCDYGNK (107 aa)) enclose the Expansin-like EG45 domain. The helical transmembrane segment at 42–62 (GACAYGSMATSFFAGHIAAAI) threads the bilayer. 2 N-linked (GlcNAc...) asparagine glycosylation sites follow: Asn-99 and Asn-102. Residues 161–244 (NYLEIKLLYQ…NWEAGKIYDA (84 aa)) enclose the Expansin-like CBD domain.

This sequence belongs to the expansin family. Expansin-like A subfamily.

Its subcellular location is the membrane. The protein is Expansin-like A1 (EXLA1) of Arabidopsis thaliana (Mouse-ear cress).